The sequence spans 187 residues: Putative acyl-coenzyme A oxidase At3g06690 (187 aa).

The disordered stretch occupies residues 1–21 (MTKEPIYSPRMLHRDPDSPRP).

Belongs to the acyl-CoA oxidase family.

The enzyme catalyses a 2,3-saturated acyl-CoA + O2 = a (2E)-enoyl-CoA + H2O2. This is Putative acyl-coenzyme A oxidase At3g06690 from Arabidopsis thaliana (Mouse-ear cress).